Here is a 295-residue protein sequence, read N- to C-terminus: Glycine N-methyltransferase (295 aa).

At Val2 the chain carries N-acetylvaline. Residues Ser4 and Tyr6 each contribute to the (6S)-5-methyl-5,6,7,8-tetrahydrofolate site. Phosphoserine is present on Ser10. 4 residues coordinate S-adenosyl-L-methionine: Tyr22, Trp31, Tyr34, and Arg41. Tyr34 carries the post-translational modification Phosphotyrosine. Lys46 is subject to N6-succinyllysine. S-adenosyl-L-methionine-binding positions include Ala65, 86 to 88, 117 to 118, 139 to 142, and Arg178; these read DAS, NW, and LGNS. An N6-succinyllysine mark is found at Lys193, Lys198, and Lys203. Position 217 (His217) interacts with (6S)-5-methyl-5,6,7,8-tetrahydrofolate. Residue Tyr223 coordinates S-adenosyl-L-methionine. Arg242 provides a ligand contact to (6S)-5-methyl-5,6,7,8-tetrahydrofolate.

The protein belongs to the class I-like SAM-binding methyltransferase superfamily. Glycine N-methyltransferase family. As to quaternary structure, homotetramer. As to expression, expressed only in liver, pancreas, and prostate.

It is found in the cytoplasm. The catalysed reaction is glycine + S-adenosyl-L-methionine = sarcosine + S-adenosyl-L-homocysteine + H(+). With respect to regulation, inhibited by 5-methyltetrahydrofolate monoglutamate and by 5-methyltetrahydrofolate pentaglutamate, inhibition is much more effective by the pentaglutamate form than by the monoglutamate form. Two molecules of 5-methyltetrahydrofolate are bound per tetramer. The binding sites are localized between subunits. Inhibitor binding may preclude movements of the polypeptide chain that are necessary for enzyme activity. In terms of biological role, catalyzes the methylation of glycine by using S-adenosylmethionine (AdoMet) to form N-methylglycine (sarcosine) with the concomitant production of S-adenosylhomocysteine (AdoHcy), a reaction regulated by the binding of 5-methyltetrahydrofolate. Plays an important role in the regulation of methyl group metabolism by regulating the ratio between S-adenosyl-L-methionine and S-adenosyl-L-homocysteine. The polypeptide is Glycine N-methyltransferase (Homo sapiens (Human)).